A 223-amino-acid chain; its full sequence is Cytidylate kinase (223 aa).

11-19 (GPAGVGKST) lines the ATP pocket.

The protein belongs to the cytidylate kinase family. Type 1 subfamily.

It localises to the cytoplasm. It carries out the reaction CMP + ATP = CDP + ADP. The enzyme catalyses dCMP + ATP = dCDP + ADP. This is Cytidylate kinase from Maridesulfovibrio salexigens (strain ATCC 14822 / DSM 2638 / NCIMB 8403 / VKM B-1763) (Desulfovibrio salexigens).